A 1090-amino-acid polypeptide reads, in one-letter code: ATP-dependent helicase/deoxyribonuclease subunit B (1090 aa).

G7–S14 is a binding site for ATP. The [4Fe-4S] cluster site is built by C719, C1035, C1038, and C1044.

The protein belongs to the helicase family. AddB/RexB type 1 subfamily. As to quaternary structure, heterodimer of AddA and AddB. Mg(2+) is required as a cofactor. It depends on [4Fe-4S] cluster as a cofactor.

The heterodimer acts as both an ATP-dependent DNA helicase and an ATP-dependent, dual-direction single-stranded exonuclease. Recognizes the chi site generating a DNA molecule suitable for the initiation of homologous recombination. The AddB subunit has 5' -&gt; 3' nuclease activity but not helicase activity. This chain is ATP-dependent helicase/deoxyribonuclease subunit B, found in Carboxydothermus hydrogenoformans (strain ATCC BAA-161 / DSM 6008 / Z-2901).